Here is a 152-residue protein sequence, read N- to C-terminus: Early glycoprotein GP48 (152 aa).

The N-terminal stretch at 1–25 is a signal peptide; the sequence is MVMMLRTWRLLPMVLLAAYCYCVFG. N48, N53, N61, N69, N108, N112, N122, N139, and N148 each carry an N-linked (GlcNAc...) asparagine; by host glycan.

This sequence belongs to the RL11 family. Post-translationally, N-glycosylated and possibly O-glycosylated.

Its subcellular location is the virion membrane. In Homo sapiens (Human), this protein is Early glycoprotein GP48 (UL4).